The chain runs to 310 residues: Ribose-phosphate pyrophosphokinase (310 aa).

ATP is bound by residues 34–36 and 93–94; these read DQE and RQ. The Mg(2+) site is built by H127 and D167. Residue K190 is part of the active site. Residues R192, D216, and 220–224 contribute to the D-ribose 5-phosphate site; that span reads DSGGT.

This sequence belongs to the ribose-phosphate pyrophosphokinase family. Class I subfamily. As to quaternary structure, homohexamer. Requires Mg(2+) as cofactor.

The protein resides in the cytoplasm. It catalyses the reaction D-ribose 5-phosphate + ATP = 5-phospho-alpha-D-ribose 1-diphosphate + AMP + H(+). It participates in metabolic intermediate biosynthesis; 5-phospho-alpha-D-ribose 1-diphosphate biosynthesis; 5-phospho-alpha-D-ribose 1-diphosphate from D-ribose 5-phosphate (route I): step 1/1. Involved in the biosynthesis of the central metabolite phospho-alpha-D-ribosyl-1-pyrophosphate (PRPP) via the transfer of pyrophosphoryl group from ATP to 1-hydroxyl of ribose-5-phosphate (Rib-5-P). This is Ribose-phosphate pyrophosphokinase from Rhizobium meliloti (strain 1021) (Ensifer meliloti).